The following is a 1177-amino-acid chain: MTGQLVQYGRHRQRRSYARISEVLELPNLIEIQTSSYQWFLDEGLREMFQDISPIEDFTGNLSLEFIDYSLGEPKYSVEECKERDVTYAAPLRVKVRLINKETGEVKEQDVFMGDFPLMTETGTFVINGAERVIVSQLVRSPSVYYSGKVDKNGKRGFTATVIPNRGAWLEYETDAKDVVYVRIDRTRKLPVTVLLRALGFGSDQEITELLGDNEYLSNTLEKDNTDSTEKALLEIYERLRPGEPPTVENAKSLLVSRFFDPKRYDLANVGRYKINKKLHIKNRLFNQRLAETLVDPETGEILAAEGTVLDRRTLDRILPYLEKNIGFKTAKPMGGVVAGDVELQSIKIYAPESEGERSINVIGNANITRDIKHITPGDILASISYFFNLLYKVGDTDDIDHLGNRRLRSVGELLQNQFRIGLSRMERVVRERMSIQDTNAITPQALINIRPVIASIKEFFGSSQLSQFMDQTNPLAELTHKRRLSALGPGGLTRERAGFEVRDVHYSHYGRMCPIETPEGPNIGLINSLSSFAKVNEFGFIETPYRRVDPETGLVTGQVDYLTADEEDNYVVAQANMKLSEVGEFLDEDIVARFRGENIVTNKERIDYMDVSPKQVVSAATACIPFLENDDSNRALMGANMQRQAVPLINPESPIVGTGMEYVSAKDSGAAVICKQPGVVERVEAREVWVRRYVDVDGQTVKGDLDRYKMQKFIRSNQGTCYNQRPIVSVGDQVVKGEILADGPSMELGELALGRNVLVGFMTWDGYNYEDAIIMSERLVKDDVYTSIHIEEYESEARDTKLGPEEITRDIPNVGEDALRNLDERGIIRVGAEVKDGDLLVGKVTPKGVTELTAEERLLHAIFGEKAREVRDTSLRVPHGGGGIILDVKVFNREDGDELPPGVNQLVRAYIVQKRKISEGDKMAGRHGNKGVISRILPEEDMPYLPDGTPIDIMLNPLGVPSRMNIGQVLELHLGMAARYLGIHIATPVFDGAREEDVWGTIEEAGMANDAKTILYDGRTGEPFDNRVSVGVMYMIKLAHMVDDKLHARSTGPYSLVTQQPLGGKAQFGGQRFGEMEVWALEAYGAAYTLQEILTVKSDDVIGRVKTYEAIVKGENVPEPGVPESFKVLIKELQSLGMDVKMMSINDTEIEMRDTEDDDDHQSADKLNVEVETTKE.

The tract at residues 1154–1177 (RDTEDDDDHQSADKLNVEVETTKE) is disordered. Residues 1162 to 1177 (HQSADKLNVEVETTKE) are compositionally biased toward basic and acidic residues.

This sequence belongs to the RNA polymerase beta chain family. As to quaternary structure, the RNAP catalytic core consists of 2 alpha, 1 beta, 1 beta' and 1 omega subunit. When a sigma factor is associated with the core the holoenzyme is formed, which can initiate transcription.

The catalysed reaction is RNA(n) + a ribonucleoside 5'-triphosphate = RNA(n+1) + diphosphate. Its function is as follows. DNA-dependent RNA polymerase catalyzes the transcription of DNA into RNA using the four ribonucleoside triphosphates as substrates. The chain is DNA-directed RNA polymerase subunit beta from Bacillus mycoides (strain KBAB4) (Bacillus weihenstephanensis).